Reading from the N-terminus, the 411-residue chain is Imidazolonepropionase (411 aa).

The Fe(3+) site is built by histidine 78 and histidine 80. 2 residues coordinate Zn(2+): histidine 78 and histidine 80. 4-imidazolone-5-propanoate contacts are provided by arginine 87, tyrosine 150, and histidine 183. N-formimidoyl-L-glutamate is bound at residue tyrosine 150. Histidine 248 is a Fe(3+) binding site. Histidine 248 is a binding site for Zn(2+). Glutamine 251 provides a ligand contact to 4-imidazolone-5-propanoate. Aspartate 322 is a Fe(3+) binding site. Position 322 (aspartate 322) interacts with Zn(2+). Residues asparagine 324 and glycine 326 each coordinate N-formimidoyl-L-glutamate. Serine 327 lines the 4-imidazolone-5-propanoate pocket.

It belongs to the metallo-dependent hydrolases superfamily. HutI family. Zn(2+) serves as cofactor. Requires Fe(3+) as cofactor.

The protein localises to the cytoplasm. The enzyme catalyses 4-imidazolone-5-propanoate + H2O = N-formimidoyl-L-glutamate. It participates in amino-acid degradation; L-histidine degradation into L-glutamate; N-formimidoyl-L-glutamate from L-histidine: step 3/3. Catalyzes the hydrolytic cleavage of the carbon-nitrogen bond in imidazolone-5-propanoate to yield N-formimidoyl-L-glutamate. It is the third step in the universal histidine degradation pathway. The protein is Imidazolonepropionase of Christiangramia forsetii (strain DSM 17595 / CGMCC 1.15422 / KT0803) (Gramella forsetii).